The sequence spans 414 residues: 2,3-diketo-5-methylthiopentyl-1-phosphate enolase (414 aa).

The active-site Proton acceptor is the K99. Residues K148, 174–177 (KDDE), H265, G338, and 360–361 (GG) contribute to the substrate site. K174, D176, and E177 together coordinate Mg(2+). The residue at position 174 (K174) is an N6-carboxylysine.

The protein belongs to the RuBisCO large chain family. Type IV subfamily. As to quaternary structure, homodimer. Requires Mg(2+) as cofactor.

It carries out the reaction 5-methylsulfanyl-2,3-dioxopentyl phosphate = 2-hydroxy-5-methylsulfanyl-3-oxopent-1-enyl phosphate. Its pathway is amino-acid biosynthesis; L-methionine biosynthesis via salvage pathway; L-methionine from S-methyl-5-thio-alpha-D-ribose 1-phosphate: step 3/6. Functionally, catalyzes the enolization of 2,3-diketo-5-methylthiopentyl-1-phosphate (DK-MTP-1-P) into 2-hydroxy-3-keto-5-methylthiopentenyl-1-phosphate (HK-MTPenyl-1-P). The polypeptide is 2,3-diketo-5-methylthiopentyl-1-phosphate enolase (Bacillus anthracis (strain CDC 684 / NRRL 3495)).